Here is a 469-residue protein sequence, read N- to C-terminus: MTTKTRFAPSPTGFLHVGGARTALYSWLQARANNGEFVLRIEDTDIERSTQAACDAILEGMNWLGLTWDEGPYYQTKRFDRYNEIIAQMLAKGTAYKCYCSRERIDALREAQAANGEAQKYDGCCRDLPARDTDEPFVVRFKNPIGGSVVFDDHVRGRIEFSNDALDDLIIARTDGVPTYNFCVVVDDWDMGITCVVRGEDHINNTPRQINILKALGAPIPEYAHVSMILGDDGAKLSKRHGAVSVMQYRDDGYLPEALLNYLVRLGWSHGDQEIFSLEEMKQYFKLGDINKAASAFNTDKLVWLNQHYIKSLAPEYVATHLQWHMDDQKIDLSNGPALAEVVTALAERAKTLKELAASSRYFYEDFAEFDEAQAKKHLRGVALEPLQLVQQKLAALTEWTVEAIHQAIEDTATELDVGMGKVGMPLRVAVTGAGQSPGLDITLFLIGRSRSEQRISKAIEFVADRINS.

Residues proline 9 to glycine 19 carry the 'HIGH' region motif. 4 residues coordinate Zn(2+): cysteine 98, cysteine 100, cysteine 125, and aspartate 127. A 'KMSKS' region motif is present at residues lysine 236–arginine 240. Lysine 239 provides a ligand contact to ATP.

This sequence belongs to the class-I aminoacyl-tRNA synthetase family. Glutamate--tRNA ligase type 1 subfamily. Monomer. Requires Zn(2+) as cofactor.

Its subcellular location is the cytoplasm. It carries out the reaction tRNA(Glu) + L-glutamate + ATP = L-glutamyl-tRNA(Glu) + AMP + diphosphate. Functionally, catalyzes the attachment of glutamate to tRNA(Glu) in a two-step reaction: glutamate is first activated by ATP to form Glu-AMP and then transferred to the acceptor end of tRNA(Glu). This is Glutamate--tRNA ligase from Shewanella baltica (strain OS185).